The primary structure comprises 899 residues: Translation initiation factor IF-2 (899 aa).

Disordered stretches follow at residues threonine 94–lysine 167 and phenylalanine 259–glutamate 309. The segment covering alanine 107–glutamate 121 has biased composition (basic and acidic residues). A compositionally biased stretch (low complexity) spans arginine 147–valine 164. Positions threonine 399–lysine 568 constitute a tr-type G domain. The G1 stretch occupies residues glycine 408–threonine 415. Glycine 408–threonine 415 contacts GTP. Residues glycine 433–histidine 437 are G2. The segment at aspartate 454–glycine 457 is G3. GTP contacts are provided by residues aspartate 454–histidine 458 and asparagine 508–aspartate 511. The tract at residues asparagine 508–aspartate 511 is G4. A G5 region spans residues serine 544–histidine 546.

Belongs to the TRAFAC class translation factor GTPase superfamily. Classic translation factor GTPase family. IF-2 subfamily.

Its subcellular location is the cytoplasm. One of the essential components for the initiation of protein synthesis. Protects formylmethionyl-tRNA from spontaneous hydrolysis and promotes its binding to the 30S ribosomal subunits. Also involved in the hydrolysis of GTP during the formation of the 70S ribosomal complex. This Acinetobacter baylyi (strain ATCC 33305 / BD413 / ADP1) protein is Translation initiation factor IF-2.